Here is a 308-residue protein sequence, read N- to C-terminus: Ribonuclease H2 subunit B (308 aa).

Ala-2 is modified (N-acetylalanine). Residue Lys-292 is modified to N6-acetyllysine. At Ser-293 the chain carries Phosphoserine.

Belongs to the RNase H2 subunit B family. In terms of assembly, the RNase H2 complex is a heterotrimer composed of the catalytic subunit RNASEH2A and the non-catalytic subunits RNASEH2B and RNASEH2C.

Its subcellular location is the nucleus. Functionally, non catalytic subunit of RNase H2, an endonuclease that specifically degrades the RNA of RNA:DNA hybrids. Participates in DNA replication, possibly by mediating the removal of lagging-strand Okazaki fragment RNA primers during DNA replication. Mediates the excision of single ribonucleotides from DNA:RNA duplexes. In Mus musculus (Mouse), this protein is Ribonuclease H2 subunit B (Rnaseh2b).